The primary structure comprises 172 residues: Large ribosomal subunit protein uL10 (172 aa).

This sequence belongs to the universal ribosomal protein uL10 family. Part of the ribosomal stalk of the 50S ribosomal subunit. The N-terminus interacts with L11 and the large rRNA to form the base of the stalk. The C-terminus forms an elongated spine to which L12 dimers bind in a sequential fashion forming a multimeric L10(L12)X complex.

Forms part of the ribosomal stalk, playing a central role in the interaction of the ribosome with GTP-bound translation factors. The protein is Large ribosomal subunit protein uL10 (rplJ) of Liberibacter asiaticus (Citrus greening disease).